An 829-amino-acid polypeptide reads, in one-letter code: Periplasmic nitrate reductase (829 aa).

The tat-type signal signal peptide spans 1-36 (MARRDFIKQTAAAAAATVAGVPLTGYTQNIVTESEA). The 57-residue stretch at 39 to 95 (LKWSKAPCRFCGTGCGVNVAVKDNQVVATHGDFNAEVNKGLNCVKGYFLSKIMYGSD) folds into the 4Fe-4S Mo/W bis-MGD-type domain. 4 residues coordinate [4Fe-4S] cluster: cysteine 46, cysteine 49, cysteine 53, and cysteine 81. Residues lysine 83, glutamine 150, asparagine 175, cysteine 179, 212 to 219 (WGSNMAEM), 243 to 247 (STFEH), 262 to 264 (QSD), methionine 373, glutamine 377, asparagine 483, 509 to 510 (SD), lysine 532, aspartate 559, and 719 to 728 (TGRVLEHWHS) contribute to the Mo-bis(molybdopterin guanine dinucleotide) site. Tryptophan 795 is a substrate binding site. Mo-bis(molybdopterin guanine dinucleotide)-binding residues include asparagine 803 and lysine 820.

Belongs to the prokaryotic molybdopterin-containing oxidoreductase family. NasA/NapA/NarB subfamily. As to quaternary structure, component of the periplasmic nitrate reductase NapAB complex composed of NapA and NapB. The cofactor is [4Fe-4S] cluster. Mo-bis(molybdopterin guanine dinucleotide) is required as a cofactor. In terms of processing, predicted to be exported by the Tat system. The position of the signal peptide cleavage has not been experimentally proven.

Its subcellular location is the periplasm. The enzyme catalyses 2 Fe(II)-[cytochrome] + nitrate + 2 H(+) = 2 Fe(III)-[cytochrome] + nitrite + H2O. Functionally, catalytic subunit of the periplasmic nitrate reductase complex NapAB. Receives electrons from NapB and catalyzes the reduction of nitrate to nitrite. The polypeptide is Periplasmic nitrate reductase (Bordetella bronchiseptica (strain ATCC BAA-588 / NCTC 13252 / RB50) (Alcaligenes bronchisepticus)).